The primary structure comprises 103 residues: UPF0145 protein CYB_1351 (103 aa).

Belongs to the UPF0145 family.

This Synechococcus sp. (strain JA-2-3B'a(2-13)) (Cyanobacteria bacterium Yellowstone B-Prime) protein is UPF0145 protein CYB_1351.